The following is a 463-amino-acid chain: Calcitonin gene-related peptide type 1 receptor (463 aa).

The first 22 residues, M1–A22, serve as a signal peptide directing secretion. The Extracellular portion of the chain corresponds to E23–L138. N29, N65, N117, N122, N127, and N128 each carry an N-linked (GlcNAc...) asparagine glycan. 3 disulfide bridges follow: C47/C73, C64/C104, and C87/C126. Residues N139–F163 form a helical membrane-spanning segment. Over Y164–T174 the chain is Cytoplasmic. Residues L175–V197 form a helical membrane-spanning segment. At A198–P208 the chain is on the extracellular side. Residues V209–H237 form a helical membrane-spanning segment. Residues T238 to L251 lie on the Cytoplasmic side of the membrane. A helical membrane pass occupies residues M252 to A272. The Extracellular portion of the chain corresponds to R273–H288. The interval T287–H288 is required for RAMP3 interaction. The helical transmembrane segment at L289–R313 threads the bilayer. At V314–N328 the chain is on the cytoplasmic side. Residues L329 to L350 form a helical membrane-spanning segment. Residues F351–D365 are Extracellular-facing. Residues Y366–F386 form a helical membrane-spanning segment. Residues N387 to M463 lie on the Cytoplasmic side of the membrane. S419 and S444 each carry phosphoserine.

It belongs to the G-protein coupled receptor 2 family. In terms of assembly, heterodimer of CALCRL and RAMP1; the receptor complex functions as CGRP receptor. Heterodimer of CALCRL and RAMP2 or CALCRL and RAMP3; the complexes function as adrenomedullin receptor. In terms of tissue distribution, expressed predominantly in the lung, thymus, heart and brain.

Its subcellular location is the cell membrane. Its function is as follows. G protein-coupled receptor which specificity is determined by its interaction with receptor-activity-modifying proteins (RAMPs). Together with RAMP1, form the receptor complex for calcitonin-gene-related peptides CALCA/CGRP1 and CALCB/CGRP2. Together with RAMP2 or RAMP3, function as receptor complexes for adrenomedullin (ADM and ADM2). Ligand binding causes a conformation change that triggers signaling via guanine nucleotide-binding proteins (G proteins) and modulates the activity of downstream effectors. Activates cAMP-dependent pathway. This Mus musculus (Mouse) protein is Calcitonin gene-related peptide type 1 receptor.